Consider the following 769-residue polypeptide: Serine protease HtrA-like (769 aa).

Basic residues predominate over residues 1 to 20 (MDIGKKHVIPKSQYRRKRRE). The interval 1–390 (MDIGKKHVIP…ATSKLNKGRA (390 aa)) is disordered. Composition is skewed to basic and acidic residues over residues 21 to 64 (FFHN…ERFK) and 71 to 108 (LEQR…DVSK). Over residues 126–137 (YEQNSEATLSTK) the composition is skewed to polar residues. Positions 138-186 (STDKVESTEMRKLSSDKNKVGHEEQHVLSKPSEHDKETRIDSESSRTDS) are enriched in basic and acidic residues. Residues 247 to 262 (QQSQNEQTKTYTYGDS) show a composition bias toward polar residues. Composition is skewed to basic and acidic residues over residues 264 to 296 (QNDK…HIVD) and 310 to 330 (KTDD…HKQN). Residues 331–347 (ADSSETVGYQSQSTASH) are compositionally biased toward polar residues. Residues 348 to 364 (RSTEKRNISINDHDKLN) show a composition bias toward basic and acidic residues. Residues 365 to 390 (GQKTNTKTSANNNQKKATSKLNKGRA) show a composition bias toward polar residues. Residues 410-430 (LVILMGIIILIVILNAIFNNV) form a helical membrane-spanning segment. Active-site charge relay system residues include H504, D534, and S619. Positions 680–733 (IASLNSFERQAVKLPGKVKNGVVVDQVDNNGLADQSGLKKGDVITELDGKLLED) constitute a PDZ domain.

The protein belongs to the peptidase S1C family.

It is found in the cell membrane. This chain is Serine protease HtrA-like, found in Staphylococcus aureus (strain USA300).